We begin with the raw amino-acid sequence, 506 residues long: Maturase K (506 aa).

The protein belongs to the intron maturase 2 family. MatK subfamily.

It is found in the plastid. Its subcellular location is the chloroplast. Functionally, usually encoded in the trnK tRNA gene intron. Probably assists in splicing its own and other chloroplast group II introns. The sequence is that of Maturase K from Trifolium lupinaster (Lupine clover).